The primary structure comprises 150 residues: Large ribosomal subunit protein bL9 (150 aa).

Belongs to the bacterial ribosomal protein bL9 family.

Functionally, binds to the 23S rRNA. The polypeptide is Large ribosomal subunit protein bL9 (Burkholderia pseudomallei (strain 668)).